The sequence spans 371 residues: tRNA-specific 2-thiouridylase MnmA (371 aa).

Residues 9 to 16 and Met-35 contribute to the ATP site; that span reads AMSGGVDS. Cys-109 acts as the Nucleophile in catalysis. Cys-109 and Cys-207 form a disulfide bridge. Gly-133 lines the ATP pocket. The tract at residues 157 to 159 is interaction with tRNA; the sequence is KDQ. The Cysteine persulfide intermediate role is filled by Cys-207.

This sequence belongs to the MnmA/TRMU family.

The protein resides in the cytoplasm. The enzyme catalyses S-sulfanyl-L-cysteinyl-[protein] + uridine(34) in tRNA + AH2 + ATP = 2-thiouridine(34) in tRNA + L-cysteinyl-[protein] + A + AMP + diphosphate + H(+). Functionally, catalyzes the 2-thiolation of uridine at the wobble position (U34) of tRNA, leading to the formation of s(2)U34. The protein is tRNA-specific 2-thiouridylase MnmA of Solibacter usitatus (strain Ellin6076).